A 905-amino-acid chain; its full sequence is Probable aromatic-L-amino-acid decarboxylase (905 aa).

Positions 250-296 are disordered; sequence YLNPIIKTPPHNERVPKMKTNISKTRKKKGKVSDASKDSRPSETKKE. Residues 280–296 are compositionally biased toward basic and acidic residues; it reads KVSDASKDSRPSETKKE. Residues T492 and S591 each contribute to the pyridoxal 5'-phosphate site. The residue at position 648 (K648) is an N6-(pyridoxal phosphate)lysine. A disordered region spans residues 861-905; the sequence is HTAEYADPPGKSNKSPQVAAKGELPSAAPPSSRTPNSDISEKSDR. Polar residues predominate over residues 889 to 898; the sequence is PPSSRTPNSD.

The protein belongs to the group II decarboxylase family. Homodimer. The cofactor is pyridoxal 5'-phosphate.

The catalysed reaction is L-dopa + H(+) = dopamine + CO2. The enzyme catalyses 5-hydroxy-L-tryptophan + H(+) = serotonin + CO2. Its pathway is catecholamine biosynthesis; dopamine biosynthesis; dopamine from L-tyrosine: step 2/2. Functionally, catalyzes the decarboxylation of L-3,4-dihydroxyphenylalanine (DOPA) to dopamine, L-5-hydroxytryptophan to serotonin and L-tryptophan to tryptamine. The polypeptide is Probable aromatic-L-amino-acid decarboxylase (hdl-1) (Caenorhabditis elegans).